Reading from the N-terminus, the 168-residue chain is Protein C2-DOMAIN ABA-RELATED 3 (168 aa).

The region spanning 1–106 is the C2 domain; it reads MSLMDNLLGI…IEALRMELSG (106 aa). Residues R24, D25, D30, D76, H77, D78, and D84 each contribute to the Ca(2+) site.

Belongs to the plant CAR protein family. As to quaternary structure, binds to PYR/PYL/RCAR abscisic acid intracellular receptors in an ABA-independent manner, both at the plasma membrane and in the nucleus. Requires Ca(2+) as cofactor.

Its subcellular location is the cell membrane. The protein resides in the nucleus. Stimulates the GTPase/ATPase activities of Obg-like ATPases. Mediates the transient calcium-dependent interaction of PYR/PYL/RCAR abscisic acid (ABA) receptors with the plasma membrane and thus regulates ABA sensitivity. The protein is Protein C2-DOMAIN ABA-RELATED 3 of Arabidopsis thaliana (Mouse-ear cress).